A 345-amino-acid polypeptide reads, in one-letter code: Protein RecA (345 aa).

63–70 (GPESSGKT) contributes to the ATP binding site. Residues 326–345 (VLSDALMTDPEPDADGTPED) form a disordered region. Acidic residues predominate over residues 335–345 (PEPDADGTPED).

Belongs to the RecA family.

The protein resides in the cytoplasm. In terms of biological role, can catalyze the hydrolysis of ATP in the presence of single-stranded DNA, the ATP-dependent uptake of single-stranded DNA by duplex DNA, and the ATP-dependent hybridization of homologous single-stranded DNAs. It interacts with LexA causing its activation and leading to its autocatalytic cleavage. This Gluconobacter oxydans (strain 621H) (Gluconobacter suboxydans) protein is Protein RecA.